Consider the following 180-residue polypeptide: Pro-glucagon (180 aa).

An N-terminal signal peptide occupies residues 1–20 (MKSIYFVAGLFVMLVQGSWQ). Residues 26–59 (TEEKSRSFSASQADPLSDPDQMNEDKRHSQGTFT) form a disordered region. Position 54 is a phosphoserine (S54). The propeptide occupies 84-89 (NRNNIA). S105 and S108 each carry phosphoserine. An Arginine amide modification is found at R127. A propeptide spanning residues 131-145 (DFPEEVAIVEELGRR) is cleaved from the precursor. A phosphoserine mark is found at S150 and S152.

The protein belongs to the glucagon family. In terms of processing, proglucagon is post-translationally processed in a tissue-specific manner in pancreatic A cells and intestinal L cells. In pancreatic A cells, the major bioactive hormone is glucagon cleaved by PCSK2/PC2. In the intestinal L cells PCSK1/PC1 liberates GLP-1, GLP-2, glicentin and oxyntomodulin. GLP-1 is further N-terminally truncated by post-translational processing in the intestinal L cells resulting in GLP-1(7-37) GLP-1-(7-36)amide. The C-terminal amidation is neither important for the metabolism of GLP-1 nor for its effects on the endocrine pancreas. As to expression, secreted in the A cells of the islets of Langerhans. Secreted in the A cells of the islets of Langerhans. Secreted from enteroendocrine L cells throughout the gastrointestinal tract. Also secreted in selected neurons in the brain. In terms of tissue distribution, secreted from enteroendocrine cells throughout the gastrointestinal tract. Also secreted in selected neurons in the brain. As to expression, secreted from enteroendocrine cells throughout the gastrointestinal tract.

It is found in the secreted. In terms of biological role, plays a key role in glucose metabolism and homeostasis. Regulates blood glucose by increasing gluconeogenesis and decreasing glycolysis. A counterregulatory hormone of insulin, raises plasma glucose levels in response to insulin-induced hypoglycemia. Plays an important role in initiating and maintaining hyperglycemic conditions in diabetes. Functionally, potent stimulator of glucose-dependent insulin release. Also stimulates insulin release in response to IL6. Plays important roles on gastric motility and the suppression of plasma glucagon levels. May be involved in the suppression of satiety and stimulation of glucose disposal in peripheral tissues, independent of the actions of insulin. Has growth-promoting activities on intestinal epithelium. May also regulate the hypothalamic pituitary axis (HPA) via effects on LH, TSH, CRH, oxytocin, and vasopressin secretion. Increases islet mass through stimulation of islet neogenesis and pancreatic beta cell proliferation. Inhibits beta cell apoptosis. Its function is as follows. Stimulates intestinal growth and up-regulates villus height in the small intestine, concomitant with increased crypt cell proliferation and decreased enterocyte apoptosis. The gastrointestinal tract, from the stomach to the colon is the principal target for GLP-2 action. Plays a key role in nutrient homeostasis, enhancing nutrient assimilation through enhanced gastrointestinal function, as well as increasing nutrient disposal. Stimulates intestinal glucose transport and decreases mucosal permeability. Significantly reduces food intake. Inhibits gastric emptying in humans. Suppression of gastric emptying may lead to increased gastric distension, which may contribute to satiety by causing a sensation of fullness. In terms of biological role, may modulate gastric acid secretion and the gastro-pyloro-duodenal activity. May play an important role in intestinal mucosal growth in the early period of life. The protein is Pro-glucagon of Homo sapiens (Human).